We begin with the raw amino-acid sequence, 336 residues long: tRNA-dihydrouridine(20/20a) synthase (336 aa).

FMN is bound by residues 24-26 (PMM) and Q77. C107 functions as the Proton donor in the catalytic mechanism. Residues K146, H178, 218–220 (NGG), and 240–241 (GR) contribute to the FMN site.

It belongs to the Dus family. DusA subfamily. Requires FMN as cofactor.

The enzyme catalyses 5,6-dihydrouridine(20) in tRNA + NADP(+) = uridine(20) in tRNA + NADPH + H(+). It catalyses the reaction 5,6-dihydrouridine(20) in tRNA + NAD(+) = uridine(20) in tRNA + NADH + H(+). It carries out the reaction 5,6-dihydrouridine(20a) in tRNA + NADP(+) = uridine(20a) in tRNA + NADPH + H(+). The catalysed reaction is 5,6-dihydrouridine(20a) in tRNA + NAD(+) = uridine(20a) in tRNA + NADH + H(+). Its function is as follows. Catalyzes the synthesis of 5,6-dihydrouridine (D), a modified base found in the D-loop of most tRNAs, via the reduction of the C5-C6 double bond in target uridines. Specifically modifies U20 and U20a in tRNAs. In Pseudomonas syringae pv. tomato (strain ATCC BAA-871 / DC3000), this protein is tRNA-dihydrouridine(20/20a) synthase.